A 106-amino-acid polypeptide reads, in one-letter code: MLLWVFFLVTLTLSSGSHGSLPSQPLRIPRYADAIFTNSYRKVLGQLSARKLLQDIMNRQQGERNQEQGAKVRLGRQVDGVWTDQQQMALESTLVSLLQERRNSQG.

The first 19 residues, 1–19 (MLLWVFFLVTLTLSSGSHG), serve as a signal peptide directing secretion. Positions 20–30 (SLPSQPLRIPR) are excised as a propeptide. At Leu74 the chain carries Leucine amide. A propeptide spanning residues 77 to 106 (QVDGVWTDQQQMALESTLVSLLQERRNSQG) is cleaved from the precursor.

This sequence belongs to the glucagon family.

It localises to the secreted. Its function is as follows. GRF is released by the hypothalamus and acts on the adenohypophyse to stimulate the secretion of growth hormone. This Bos taurus (Bovine) protein is Somatoliberin (GHRH).